The primary structure comprises 209 residues: Regulator of G-protein signaling 1 (209 aa).

Residues 19–42 (FSASPKDSKEHSHSLLDDKKQKKR) are disordered. The segment covering 24 to 38 (KDSKEHSHSLLDDKK) has biased composition (basic and acidic residues). Residues 85–200 (SLEKLLANQT…LKSNIYLNLL (116 aa)) enclose the RGS domain.

In terms of assembly, interacts with GNAI1 and GNAQ. In terms of tissue distribution, detected in spleen, lymph node and intestine.

It is found in the cell membrane. The protein localises to the cytoplasm. Its subcellular location is the cytosol. Its function is as follows. Regulates G protein-coupled receptor signaling cascades, including signaling downstream of the N-formylpeptide chemoattractant receptors and leukotriene receptors. Inhibits B cell chemotaxis toward CXCL12. Inhibits signal transduction by increasing the GTPase activity of G protein alpha subunits thereby driving them into their inactive GDP-bound form. The polypeptide is Regulator of G-protein signaling 1 (Rgs1) (Mus musculus (Mouse)).